Reading from the N-terminus, the 96-residue chain is Protein Vpr (96 aa).

Residues 1–42 (MEQAPEDQGPQREPYNEWTLELLEELKSEAVRHFPRIWLHNL) form a homooligomerization region. Ser79, Ser94, and Ser96 each carry phosphoserine; by host.

It belongs to the HIV-1 VPR protein family. As to quaternary structure, homooligomer, may form homodimer. Interacts with p6-gag region of the Pr55 Gag precursor protein through a (Leu-X-X)4 motif near the C-terminus of the P6gag protein. Interacts with host UNG. May interact with host RAD23A/HHR23A. Interacts with host VPRBP/DCAF1, leading to hijack the CUL4A-RBX1-DDB1-DCAF1/VPRBP complex, mediating ubiquitination of host proteins such as TERT and ZGPAT and arrest of the cell cycle in G2 phase. Post-translationally, phosphorylated on several residues by host. These phosphorylations regulate VPR activity for the nuclear import of the HIV-1 pre-integration complex.

The protein localises to the virion. It localises to the host nucleus. It is found in the host extracellular space. In terms of biological role, during virus replication, may deplete host UNG protein, and incude G2-M cell cycle arrest. Acts by targeting specific host proteins for degradation by the 26S proteasome, through association with the cellular CUL4A-DDB1 E3 ligase complex by direct interaction with host VPRPB/DCAF-1. Cell cycle arrest reportedly occurs within hours of infection and is not blocked by antiviral agents, suggesting that it is initiated by the VPR carried into the virion. Additionally, VPR induces apoptosis in a cell cycle dependent manner suggesting that these two effects are mechanistically linked. Detected in the serum and cerebrospinal fluid of AIDS patient, VPR may also induce cell death to bystander cells. During virus entry, plays a role in the transport of the viral pre-integration (PIC) complex to the host nucleus. This function is crucial for viral infection of non-dividing macrophages. May act directly at the nuclear pore complex, by binding nucleoporins phenylalanine-glycine (FG)-repeat regions. This chain is Protein Vpr, found in Homo sapiens (Human).